Reading from the N-terminus, the 643-residue chain is Threonine--tRNA ligase (643 aa).

In terms of domain architecture, TGS spans 1–65; the sequence is MIHITLPDGS…NKDMPLSIVT (65 aa). The catalytic stretch occupies residues 246–537; it reads DHRKLGRELD…LIEQHAGAMP (292 aa). Zn(2+) is bound by residues C337, H388, and H514.

It belongs to the class-II aminoacyl-tRNA synthetase family. As to quaternary structure, homodimer. The cofactor is Zn(2+).

The protein resides in the cytoplasm. It catalyses the reaction tRNA(Thr) + L-threonine + ATP = L-threonyl-tRNA(Thr) + AMP + diphosphate + H(+). Catalyzes the attachment of threonine to tRNA(Thr) in a two-step reaction: L-threonine is first activated by ATP to form Thr-AMP and then transferred to the acceptor end of tRNA(Thr). Also edits incorrectly charged L-seryl-tRNA(Thr). The sequence is that of Threonine--tRNA ligase from Delftia acidovorans (strain DSM 14801 / SPH-1).